We begin with the raw amino-acid sequence, 131 residues long: Profilin-3 (131 aa).

A disulfide bridge connects residues Cys13 and Cys115. Positions 81-97 (AVIRGKKGAGGITIKKT) match the Involved in PIP2 interaction motif. A Phosphothreonine modification is found at Thr111.

Belongs to the profilin family. As to quaternary structure, occurs in many kinds of cells as a complex with monomeric actin in a 1:1 ratio. In terms of processing, phosphorylated by MAP kinases.

It is found in the cytoplasm. Its subcellular location is the cytoskeleton. Binds to actin and affects the structure of the cytoskeleton. At high concentrations, profilin prevents the polymerization of actin, whereas it enhances it at low concentrations. The polypeptide is Profilin-3 (Olea europaea (Common olive)).